The following is a 525-amino-acid chain: MSL complex subunit 3 (525 aa).

One can recognise a Tudor-knot domain in the interval 13-72 (SGEKVLCFEPDPTKARVLYDAKIIDVIIGKDEKGRKIPEYLIHFNGWNRSWDRWAAEEHV). Disordered stretches follow at residues 119 to 148 (KEKS…KEHR) and 302 to 383 (TTTT…DTSA). Basic and acidic residues predominate over residues 136–146 (SCGEKNGGIKE). The region spanning 172 to 521 (DERTITIDIP…CEAHYSTKNP (350 aa)) is the MRG domain. Residues 294-444 (FFLPIKESTT…WKLVPDNYPP (151 aa)) form a required for the histone acetyltransferase activity of the MSL complex region. Residues S313 and S315 each carry the phosphoserine modification. Residues 320–332 (NPSTPQSTESQPP) are compositionally biased toward low complexity. Phosphoserine occurs at positions 371 and 404. Position 409 is a phosphothreonine (T409). S411 and S415 each carry phosphoserine.

As to quaternary structure, component of the MSL histone acetyltransferase complex at least composed of the KAT8/MOF, MSL1/hampin, MSL2 and MSL3. Interacts (via the MRG domain) with MSL1 and KAT8/MOF. As to expression, in testis, expression is mostly restricted to the spermatocyte stage and only in a small portion of spermatogonia.

Its subcellular location is the nucleus. Functionally, non-catalytic component of the MSL histone acetyltransferase complex, a multiprotein complex that mediates the majority of histone H4 acetylation at 'Lys-16' (H4K16ac), an epigenetic mark that prevents chromatin compaction. The MSL complex is required for chromosome stability and genome integrity by maintaining homeostatic levels of H4K16ac. The MSL complex is also involved in gene dosage by promoting up-regulation of genes expressed by the X chromosome. X up-regulation is required to compensate for autosomal biallelic expression. The MSL complex also participates in gene dosage compensation by promoting expression of Tsix non-coding RNA. Acts as a histone reader that specifically recognizes and binds histone H4 monomethylated at 'Lys-20' (H4K20Me1) in a DNA-dependent manner and is proposed to be involved in chromosomal targeting of the MSL complex. May play a role X inactivation in females. This chain is MSL complex subunit 3, found in Mus musculus (Mouse).